A 262-amino-acid polypeptide reads, in one-letter code: Global transcriptional regulator CodY (262 aa).

Positions Met1 to Leu159 are GAF domain. Residues Ala207 to Arg226 constitute a DNA-binding region (H-T-H motif).

It belongs to the CodY family.

It localises to the cytoplasm. Its function is as follows. DNA-binding global transcriptional regulator which is involved in the adaptive response to starvation and acts by directly or indirectly controlling the expression of numerous genes in response to nutrient availability. During rapid exponential growth, CodY is highly active and represses genes whose products allow adaptation to nutrient depletion. This chain is Global transcriptional regulator CodY, found in Streptococcus pneumoniae serotype 4 (strain ATCC BAA-334 / TIGR4).